The sequence spans 231 residues: Glycerol-3-phosphate acyltransferase (231 aa).

Helical transmembrane passes span Phe-6 to Gly-26, Trp-55 to Leu-75, Leu-95 to Phe-115, Ile-130 to Leu-150, Leu-152 to Trp-172, and Leu-196 to Ile-216.

This sequence belongs to the PlsY family. In terms of assembly, probably interacts with PlsX.

Its subcellular location is the cell membrane. It catalyses the reaction an acyl phosphate + sn-glycerol 3-phosphate = a 1-acyl-sn-glycero-3-phosphate + phosphate. The protein operates within lipid metabolism; phospholipid metabolism. Catalyzes the transfer of an acyl group from acyl-phosphate (acyl-PO(4)) to glycerol-3-phosphate (G3P) to form lysophosphatidic acid (LPA). This enzyme utilizes acyl-phosphate as fatty acyl donor, but not acyl-CoA or acyl-ACP. The sequence is that of Glycerol-3-phosphate acyltransferase from Aster yellows witches'-broom phytoplasma (strain AYWB).